The primary structure comprises 221 residues: Glutathione S-transferase (221 aa).

Residues 3–83 (GKPVLHYANT…YIAGKYNLYG (81 aa)) enclose the GST N-terminal domain. Residues tyrosine 9, lysine 45, 54-55 (QV), and 67-68 (QT) contribute to the glutathione site. A GST C-terminal domain is found at 85–208 (DLKERALIDM…QPGSQRKPRL (124 aa)).

This sequence belongs to the GST superfamily. Alpha family. Homodimer or heterodimer of GSTA1 and GSTA2.

It carries out the reaction RX + glutathione = an S-substituted glutathione + a halide anion + H(+). The catalysed reaction is prostaglandin A2 + glutathione = prostaglandin A2-S-(R)-glutathione. It catalyses the reaction prostaglandin J2 + glutathione = prostaglandin J2-S-(R)-glutathione. The enzyme catalyses (13S)-hydroperoxy-(9Z,11E)-octadecadienoate + 2 glutathione = (13S)-hydroxy-(9Z,11E)-octadecadienoate + glutathione disulfide + H2O. It carries out the reaction androst-5-ene-3,17-dione = androst-4-ene-3,17-dione. Functionally, glutathione S-transferase that catalyzes the nucleophilic attack of the sulfur atom of glutathione on the electrophilic groups of a wide range of exogenous and endogenous compounds. Involved in the formation of glutathione conjugates of both prostaglandin A2 (PGA2) and prostaglandin J2 (PGJ2). It also catalyzes the isomerization of D5-androstene-3,17-dione (AD) into D4-androstene-3,17-dione and may therefore play an important role in hormone biosynthesis. Through its glutathione-dependent peroxidase activity toward the fatty acid hydroperoxide (13S)-hydroperoxy-(9Z,11E)-octadecadienoate/13-HPODE it is also involved in the metabolism of oxidized linoleic acid. The protein is Glutathione S-transferase of Gallus gallus (Chicken).